Reading from the N-terminus, the 459-residue chain is Cysteine--tRNA ligase (459 aa).

C28 serves as a coordination point for Zn(2+). Positions 30–40 match the 'HIGH' region motif; sequence VTIYDLCHIGH. C209, H234, and E238 together coordinate Zn(2+). The short motif at 266–270 is the 'KMSKS' region element; it reads KMSKS. ATP is bound at residue K269.

This sequence belongs to the class-I aminoacyl-tRNA synthetase family. As to quaternary structure, monomer. It depends on Zn(2+) as a cofactor.

It is found in the cytoplasm. The enzyme catalyses tRNA(Cys) + L-cysteine + ATP = L-cysteinyl-tRNA(Cys) + AMP + diphosphate. The chain is Cysteine--tRNA ligase from Shewanella baltica (strain OS195).